Reading from the N-terminus, the 214-residue chain is Ras-related protein RABA2b (214 aa).

19 to 26 (GDSGVGKS) serves as a coordination point for GTP. The Effector region motif lies at 41–49 (SKSTIGVEF). GTP-binding positions include 67-71 (DTAGQ), 125-128 (NKSD), and 155-156 (SA). S-geranylgeranyl cysteine attachment occurs at residues Cys211 and Cys212.

The protein belongs to the small GTPase superfamily. Rab family. As to expression, expressed in root tips.

It localises to the endosome membrane. The protein resides in the golgi apparatus. Its subcellular location is the trans-Golgi network membrane. Intracellular vesicle trafficking and protein transport. This is Ras-related protein RABA2b (RABA2B) from Arabidopsis thaliana (Mouse-ear cress).